The following is a 309-amino-acid chain: tRNA dimethylallyltransferase (309 aa).

15–22 (GPTASGKS) provides a ligand contact to ATP. 17–22 (TASGKS) contributes to the substrate binding site. Residues 40 to 43 (DSRQ) form an interaction with substrate tRNA region.

It belongs to the IPP transferase family. Monomer. Requires Mg(2+) as cofactor.

The catalysed reaction is adenosine(37) in tRNA + dimethylallyl diphosphate = N(6)-dimethylallyladenosine(37) in tRNA + diphosphate. Functionally, catalyzes the transfer of a dimethylallyl group onto the adenine at position 37 in tRNAs that read codons beginning with uridine, leading to the formation of N6-(dimethylallyl)adenosine (i(6)A). This is tRNA dimethylallyltransferase from Chlorobium phaeovibrioides (strain DSM 265 / 1930) (Prosthecochloris vibrioformis (strain DSM 265)).